Reading from the N-terminus, the 357-residue chain is Hemolysin VllY (357 aa).

VOC domains follow at residues 12–132 and 162–313; these read GFEF…FVDR and EIDH…IFTQ. Fe cation is bound by residues His165, His243, and Glu322.

This sequence belongs to the 4HPPD family. The cofactor is Fe cation.

This is Hemolysin VllY (vllY) from Vibrio vulnificus (strain CMCP6).